Reading from the N-terminus, the 279-residue chain is uncharacterized protein (279 aa).

A run of 6 helical transmembrane segments spans residues P29–F49, V77–L97, W105–T125, V147–V167, T186–F206, and P240–V260.

The protein belongs to the DcuC/DcuD transporter (TC 2.A.61) family.

It is found in the cell membrane. This is an uncharacterized protein from Haemophilus influenzae (strain ATCC 51907 / DSM 11121 / KW20 / Rd).